Here is a 359-residue protein sequence, read N- to C-terminus: 3-dehydroquinate synthase (359 aa).

Residues 71 to 76, 105 to 109, 129 to 130, lysine 142, lysine 151, and 169 to 172 contribute to the NAD(+) site; these read DGEAHK, GVIGD, TT, and TLHT. Positions 184, 247, and 264 each coordinate Zn(2+).

The protein belongs to the sugar phosphate cyclases superfamily. Dehydroquinate synthase family. Co(2+) is required as a cofactor. Zn(2+) serves as cofactor. It depends on NAD(+) as a cofactor.

It localises to the cytoplasm. The catalysed reaction is 7-phospho-2-dehydro-3-deoxy-D-arabino-heptonate = 3-dehydroquinate + phosphate. It functions in the pathway metabolic intermediate biosynthesis; chorismate biosynthesis; chorismate from D-erythrose 4-phosphate and phosphoenolpyruvate: step 2/7. In terms of biological role, catalyzes the conversion of 3-deoxy-D-arabino-heptulosonate 7-phosphate (DAHP) to dehydroquinate (DHQ). The sequence is that of 3-dehydroquinate synthase from Neisseria gonorrhoeae (strain ATCC 700825 / FA 1090).